Here is a 670-residue protein sequence, read N- to C-terminus: Methionine--tRNA ligase (670 aa).

The 'HIGH' region motif lies at 14–24 (PYANGHLHLGH). The Zn(2+) site is built by Cys-145, Cys-148, Cys-158, and Cys-161. Positions 330-334 (KMSKS) match the 'KMSKS' region motif. Position 333 (Lys-333) interacts with ATP. The 101-residue stretch at 570–670 (DFAKVDLRIA…AGALPGMKVK (101 aa)) folds into the tRNA-binding domain.

Belongs to the class-I aminoacyl-tRNA synthetase family. MetG type 1 subfamily. Homodimer. The cofactor is Zn(2+).

It localises to the cytoplasm. The enzyme catalyses tRNA(Met) + L-methionine + ATP = L-methionyl-tRNA(Met) + AMP + diphosphate. Is required not only for elongation of protein synthesis but also for the initiation of all mRNA translation through initiator tRNA(fMet) aminoacylation. This Legionella pneumophila (strain Paris) protein is Methionine--tRNA ligase.